The following is a 177-amino-acid chain: ATP synthase subunit delta (177 aa).

Belongs to the ATPase delta chain family. As to quaternary structure, F-type ATPases have 2 components, F(1) - the catalytic core - and F(0) - the membrane proton channel. F(1) has five subunits: alpha(3), beta(3), gamma(1), delta(1), epsilon(1). F(0) has three main subunits: a(1), b(2) and c(10-14). The alpha and beta chains form an alternating ring which encloses part of the gamma chain. F(1) is attached to F(0) by a central stalk formed by the gamma and epsilon chains, while a peripheral stalk is formed by the delta and b chains.

It is found in the cell inner membrane. Functionally, f(1)F(0) ATP synthase produces ATP from ADP in the presence of a proton or sodium gradient. F-type ATPases consist of two structural domains, F(1) containing the extramembraneous catalytic core and F(0) containing the membrane proton channel, linked together by a central stalk and a peripheral stalk. During catalysis, ATP synthesis in the catalytic domain of F(1) is coupled via a rotary mechanism of the central stalk subunits to proton translocation. In terms of biological role, this protein is part of the stalk that links CF(0) to CF(1). It either transmits conformational changes from CF(0) to CF(1) or is implicated in proton conduction. The sequence is that of ATP synthase subunit delta from Sulfurimonas denitrificans (strain ATCC 33889 / DSM 1251) (Thiomicrospira denitrificans (strain ATCC 33889 / DSM 1251)).